The following is a 529-amino-acid chain: NAD(P)H-quinone oxidoreductase chain 4 1 (529 aa).

A run of 13 helical transmembrane segments spans residues 4–24, 36–56, 91–111, 115–135, 137–157, 169–189, 209–229, 243–263, 277–297, 314–334, 335–355, 387–407, and 417–437; these read FPWLTTIILFPIVAALAIPFI, WYALAVGLIDFALIVYAFTNF, LILLTGFITTLAILAAWPVTL, LFYFLMLAMYGGQIAVFAVQD, LVFFLAWELELIPVYLLLAIW, FILYTAGSSLFILVAGLAMAF, GFQLLVYAGFLVAYGVKLPIV, TAPVHMLLAGILLKMGGYALI, FAPVLVILGVVNIIYAALTSY, IGFVLIGIASFTNLGMSGAVL, QMVSHGLIGASLFFLVGATYD, LALPGMSGFVAELMVFIGFAT, and VIVVFLAAVGVILTPIYLLSM.

This sequence belongs to the complex I subunit 4 family.

The protein localises to the cellular thylakoid membrane. It catalyses the reaction a plastoquinone + NADH + (n+1) H(+)(in) = a plastoquinol + NAD(+) + n H(+)(out). The catalysed reaction is a plastoquinone + NADPH + (n+1) H(+)(in) = a plastoquinol + NADP(+) + n H(+)(out). Functionally, NDH-1 shuttles electrons from NAD(P)H, via FMN and iron-sulfur (Fe-S) centers, to quinones in the respiratory chain. The immediate electron acceptor for the enzyme in this species is believed to be plastoquinone. Couples the redox reaction to proton translocation (for every two electrons transferred, four hydrogen ions are translocated across the cytoplasmic membrane), and thus conserves the redox energy in a proton gradient. The polypeptide is NAD(P)H-quinone oxidoreductase chain 4 1 (Thermosynechococcus vestitus (strain NIES-2133 / IAM M-273 / BP-1)).